Here is a 451-residue protein sequence, read N- to C-terminus: Heat shock factor protein (451 aa).

Residues 12–117 (VPAFLAKLWT…LLENIKRKVN (106 aa)) mediate DNA binding. Disordered regions lie at residues 210–273 (LNDS…LEAS) and 285–307 (LTPS…PISP). Polar residues predominate over residues 232–246 (PSSTSYPVSGFTDSS).

The protein belongs to the HSF family. As to quaternary structure, homotrimer. Exhibits temperature-dependent phosphorylation.

The protein localises to the nucleus. In terms of biological role, DNA-binding protein that specifically binds heat shock promoter elements (HSE) and activates transcription. The sequence is that of Heat shock factor protein (hsf1) from Xenopus laevis (African clawed frog).